The following is a 278-amino-acid chain: Ankyrin repeat and SOCS box protein 13 (278 aa).

ANK repeat units lie at residues 18–47 (VERTPVHEAAQRGESLQLQQLIDSGACVNQ), 51–80 (DSITPLHAASLQGQAQCVQLLLAAGAQVDA), 84–113 (DGSTPLCDACASGSIECVKLLLSYGAKVNP), 116–145 (YTASPLHEACMSGSSECVRLLIDVGANLEA), 149–178 (HFGTPLHVACAREHLDCVKVLLNAGANVNA), and 181–210 (LHETALHHAAKVKNVDLIEMLIEFGGNIYA). One can recognise an SOCS box domain in the interval 229 to 278 (AKCFEYYEKTPLSLSQLCRVSLRKATGVRGLEKVAKLNIPPRLIDYLSYN).

Belongs to the ankyrin SOCS box (ASB) family.

It functions in the pathway protein modification; protein ubiquitination. May be a substrate-recognition component of a SCF-like ECS (Elongin-Cullin-SOCS-box protein) E3 ubiquitin-protein ligase complex which mediates the ubiquitination and subsequent proteasomal degradation of target proteins. This chain is Ankyrin repeat and SOCS box protein 13 (Asb13), found in Mus musculus (Mouse).